We begin with the raw amino-acid sequence, 341 residues long: Heat-inducible transcription repressor HrcA (341 aa).

This sequence belongs to the HrcA family.

Functionally, negative regulator of class I heat shock genes (grpE-dnaK-dnaJ and groELS operons). Prevents heat-shock induction of these operons. This chain is Heat-inducible transcription repressor HrcA, found in Mycobacteroides abscessus (strain ATCC 19977 / DSM 44196 / CCUG 20993 / CIP 104536 / JCM 13569 / NCTC 13031 / TMC 1543 / L948) (Mycobacterium abscessus).